Here is a 502-residue protein sequence, read N- to C-terminus: UDP-N-acetylmuramoylalanine--D-glutamate ligase (502 aa).

An ATP-binding site is contributed by 136–142 (GTNGKTT).

This sequence belongs to the MurCDEF family.

The protein resides in the cytoplasm. The catalysed reaction is UDP-N-acetyl-alpha-D-muramoyl-L-alanine + D-glutamate + ATP = UDP-N-acetyl-alpha-D-muramoyl-L-alanyl-D-glutamate + ADP + phosphate + H(+). It participates in cell wall biogenesis; peptidoglycan biosynthesis. Its function is as follows. Cell wall formation. Catalyzes the addition of glutamate to the nucleotide precursor UDP-N-acetylmuramoyl-L-alanine (UMA). The chain is UDP-N-acetylmuramoylalanine--D-glutamate ligase from Corynebacterium jeikeium (strain K411).